The following is a 375-amino-acid chain: Growth/differentiation factor 8 (375 aa).

The signal sequence occupies residues 1–23; it reads MQKLQLCVYIYLFMLIVAGPVDL. The propeptide occupies 24 to 266; that stretch reads NENSEQKENV…VTDTPKRSRR (243 aa). N-linked (GlcNAc...) asparagine glycosylation occurs at Asn-71. Intrachain disulfides connect Cys-272–Cys-282, Cys-281–Cys-340, Cys-309–Cys-372, and Cys-313–Cys-374.

Belongs to the TGF-beta family. Homodimer; disulfide-linked. Interacts with WFIKKN2, leading to inhibit its activity. Interacts with FSTL3. Synthesized as large precursor molecule that undergoes proteolytic cleavage to generate an N-terminal propeptide and a disulfide linked C-terminal dimer, which is the biologically active molecule. The circulating form consists of a latent complex of the C-terminal dimer and other proteins, including its propeptide, which maintain the C-terminal dimer in a latent, inactive state. Ligand activation requires additional cleavage of the prodomain by a tolloid-like metalloproteinase.

The protein localises to the secreted. In terms of biological role, acts specifically as a negative regulator of skeletal muscle growth. In Pan paniscus (Pygmy chimpanzee), this protein is Growth/differentiation factor 8 (MSTN).